The following is a 352-amino-acid chain: Serine protease 55 (352 aa).

Positions 1–18 (MLLFSVLLLLSLVTGTQL) are cleaved as a signal peptide. A Peptidase S1 domain is found at 68 to 300 (ITGGMEAEVG…YNLWIEKVTQ (233 aa)). A disulfide bridge links C93 with C109. Catalysis depends on charge relay system residues H108 and D156. Cystine bridges form between C189–C256, C222–C235, and C246–C276. An N-linked (GlcNAc...) asparagine glycan is attached at N240. The active-site Charge relay system is the S250. The interval 308 to 330 (AEKRRTSVKQKPMGSPVSGVPEP) is disordered. The segment covering 319 to 330 (PMGSPVSGVPEP) has biased composition (low complexity). S325 carries GPI-anchor amidated serine lipidation. A propeptide spans 326–352 (GVPEPGSPRSWLLLCPLSHVLFRAILY) (removed in mature form).

This sequence belongs to the peptidase S1 family. As to expression, only detected in testis. Expressed in spermatogonia, spermatocytes, spermatids, Leydig and Sertoli cells. Expressed in prostate cancer and ovarian cancer (at protein level).

It is found in the cell membrane. It localises to the cytoplasm. The protein localises to the cytosol. Its function is as follows. Probable serine protease, which plays a crucial role in the fertility of male mice including sperm migration and sperm-egg interaction. The polypeptide is Serine protease 55 (PRSS55) (Homo sapiens (Human)).